Here is a 583-residue protein sequence, read N- to C-terminus: Sensor protein SrrB (583 aa).

The Cytoplasmic portion of the chain corresponds to 1-11 (MMSRLNSVVIK). Residues 12-32 (LWLTIILIVTTVLILLSIALI) form a helical membrane-spanning segment. Residues 33–174 (TFMQYYFTQE…SIEDTNNAIT (142 aa)) are Extracellular-facing. A helical membrane pass occupies residues 175-195 (IITIITAVIFLTITTVFAFFL). Topologically, residues 196 to 583 (SSRITKPLRR…TFIIKLPKPE (388 aa)) are cytoplasmic. The region spanning 197–249 (SRITKPLRRLRDQATRVSEGDYSYKPSVTTKDEIGQLSQAFNQMSTEIEEHVD) is the HAMP domain. Positions 366–583 (NVSHELRTPI…TFIIKLPKPE (218 aa)) constitute a Histidine kinase domain. H369 is subject to Phosphohistidine; by autocatalysis.

It is found in the cell membrane. It catalyses the reaction ATP + protein L-histidine = ADP + protein N-phospho-L-histidine.. Functionally, member of the two-component regulatory system SrrA/SrrB, which is involved in the global regulation of staphylococcal virulence factors in response to environmental oxygen levels as well as biofilm formation. Also plays an essential role in host-derived nitric oxide resistance by regulating hmp/flavohemoglobin, an enzyme that detoxifies nitric oxide by converting it to nitrate. Functions as a sensor protein kinase which is autophosphorylated at a histidine residue and transfers its phosphate group to SrrA. In turn, SrrA binds to the upstream promoter regions of the target genes to positively and negatively regulate their expression. This chain is Sensor protein SrrB (srrB), found in Staphylococcus aureus (strain MW2).